The sequence spans 304 residues: Glycine--tRNA ligase alpha subunit (304 aa).

It belongs to the class-II aminoacyl-tRNA synthetase family. In terms of assembly, tetramer of two alpha and two beta subunits.

It is found in the cytoplasm. It carries out the reaction tRNA(Gly) + glycine + ATP = glycyl-tRNA(Gly) + AMP + diphosphate. The polypeptide is Glycine--tRNA ligase alpha subunit (Pectobacterium atrosepticum (strain SCRI 1043 / ATCC BAA-672) (Erwinia carotovora subsp. atroseptica)).